A 77-amino-acid chain; its full sequence is Small ribosomal subunit protein bS18 (77 aa).

It belongs to the bacterial ribosomal protein bS18 family. Part of the 30S ribosomal subunit. Forms a tight heterodimer with protein bS6.

In terms of biological role, binds as a heterodimer with protein bS6 to the central domain of the 16S rRNA, where it helps stabilize the platform of the 30S subunit. This Shouchella clausii (strain KSM-K16) (Alkalihalobacillus clausii) protein is Small ribosomal subunit protein bS18.